Reading from the N-terminus, the 440-residue chain is Ribulose bisphosphate carboxylase large chain (440 aa).

Lys4 bears the N6,N6,N6-trimethyllysine mark. Residues Asn113 and Thr163 each contribute to the substrate site. The active-site Proton acceptor is Lys165. Lys167 is a binding site for substrate. Mg(2+)-binding residues include Lys191, Asp193, and Glu194. Residue Lys191 is modified to N6-carboxylysine. His284 acts as the Proton acceptor in catalysis. Residues Arg285, His317, and Ser369 each coordinate substrate.

This sequence belongs to the RuBisCO large chain family. Type I subfamily. In terms of assembly, heterohexadecamer of 8 large chains and 8 small chains; disulfide-linked. The disulfide link is formed within the large subunit homodimers. Mg(2+) serves as cofactor. Post-translationally, the disulfide bond which can form in the large chain dimeric partners within the hexadecamer appears to be associated with oxidative stress and protein turnover.

The protein resides in the plastid. Its subcellular location is the chloroplast. The enzyme catalyses 2 (2R)-3-phosphoglycerate + 2 H(+) = D-ribulose 1,5-bisphosphate + CO2 + H2O. It catalyses the reaction D-ribulose 1,5-bisphosphate + O2 = 2-phosphoglycolate + (2R)-3-phosphoglycerate + 2 H(+). Its function is as follows. RuBisCO catalyzes two reactions: the carboxylation of D-ribulose 1,5-bisphosphate, the primary event in carbon dioxide fixation, as well as the oxidative fragmentation of the pentose substrate in the photorespiration process. Both reactions occur simultaneously and in competition at the same active site. This chain is Ribulose bisphosphate carboxylase large chain, found in Onoclea sensibilis (Sensitive fern).